A 188-amino-acid chain; its full sequence is UPF0461 protein C5orf24 homolog (188 aa).

Ser37 carries the post-translational modification Phosphoserine. Lys75 participates in a covalent cross-link: Glycyl lysine isopeptide (Lys-Gly) (interchain with G-Cter in SUMO2). Residues 80 to 92 (KKKNLNRSGKRGR) are compositionally biased toward basic residues. The segment at 80–141 (KKKNLNRSGK…AGYKVSPGRP (62 aa)) is disordered. A compositionally biased stretch (polar residues) spans 94 to 107 (SGTTKSAGYRTSTG). A phosphoserine mark is found at Ser121 and Ser180. Lys184 participates in a covalent cross-link: Glycyl lysine isopeptide (Lys-Gly) (interchain with G-Cter in SUMO2).

The protein belongs to the UPF0461 family.

This chain is UPF0461 protein C5orf24 homolog, found in Mus musculus (Mouse).